The primary structure comprises 76 residues: Large ribosomal subunit protein uL29 (76 aa).

The protein belongs to the universal ribosomal protein uL29 family.

This Corynebacterium efficiens (strain DSM 44549 / YS-314 / AJ 12310 / JCM 11189 / NBRC 100395) protein is Large ribosomal subunit protein uL29.